The following is a 198-amino-acid chain: Putative NADH dehydrogenase/NAD(P)H nitroreductase XOO4267 (198 aa).

The protein belongs to the nitroreductase family. HadB/RutE subfamily. FMN serves as cofactor.

This is Putative NADH dehydrogenase/NAD(P)H nitroreductase XOO4267 from Xanthomonas oryzae pv. oryzae (strain KACC10331 / KXO85).